A 257-amino-acid chain; its full sequence is Myosin-8 (257 aa).

A coiled-coil region spans residues 1–257; that stretch reads RAALQAEIEE…REVHTKISAE (257 aa). Phosphoserine is present on residues serine 33, serine 45, and serine 58.

In terms of assembly, muscle myosin is a hexameric protein that consists of 2 heavy chain subunits (MHC), 2 alkali light chain subunits (MLC) and 2 regulatory light chain subunits (MLC-2).

It is found in the cytoplasm. The protein resides in the myofibril. In terms of biological role, muscle contraction. The protein is Myosin-8 (Myh8) of Rattus norvegicus (Rat).